We begin with the raw amino-acid sequence, 401 residues long: MRTDYLFTSESVSEGHPDKVSDQISDAIVDLFLSKDPEARIACETLTTTQLVVLAGEIRCKGVYENGEWAPGAQDEIEKTVRDTVKRIGYEQDGFHWERLEFINRLHGQSAHIAQGVDAADNKDEGAGDQGIMFGYATDETPDLMPATLYYSHKILERMAADRHSGAAPFLEPDAKSQVTLRYEGSLPVAATAVVVSTQHAPGYDEGGKEAELHEYVKRVVAEVIPPVLLRETKYYINPTGSFEIGGPDGDAGLTGRKIIVDTYGGAAPHGGGAFSGKDPTKVDRSAAYITRYLAKNVVAAGLATRCTIQIAYAIGVSEPLSLYVDTHETGTVGDDKIEQAILGIAKLGGLTPRAIRTHLGLNKPIYRPTAAYGHFGRKADGDFFPWERLDLVDDLKAAFA.

ATP is bound at residue His-16. Asp-18 serves as a coordination point for Mg(2+). Glu-44 is a K(+) binding site. Glu-57 and Gln-109 together coordinate L-methionine. Positions 109-119 (QSAHIAQGVDA) are flexible loop. Residues 174–176 (DAK), Asp-251, 257–258 (RK), Ala-274, and Lys-278 each bind ATP. Asp-251 is a binding site for L-methionine. Residue Lys-282 participates in L-methionine binding.

This sequence belongs to the AdoMet synthase family. Homotetramer; dimer of dimers. Mg(2+) is required as a cofactor. K(+) serves as cofactor.

Its subcellular location is the cytoplasm. The enzyme catalyses L-methionine + ATP + H2O = S-adenosyl-L-methionine + phosphate + diphosphate. The protein operates within amino-acid biosynthesis; S-adenosyl-L-methionine biosynthesis; S-adenosyl-L-methionine from L-methionine: step 1/1. In terms of biological role, catalyzes the formation of S-adenosylmethionine (AdoMet) from methionine and ATP. The overall synthetic reaction is composed of two sequential steps, AdoMet formation and the subsequent tripolyphosphate hydrolysis which occurs prior to release of AdoMet from the enzyme. This is S-adenosylmethionine synthase from Novosphingobium aromaticivorans (strain ATCC 700278 / DSM 12444 / CCUG 56034 / CIP 105152 / NBRC 16084 / F199).